Consider the following 617-residue polypeptide: Chaperone protein DnaK (617 aa).

Residues 579 to 617 (KAQQEAQQASGEAGSADARGPDETVVDADYEVVDDEKRK) form a disordered region. Residues 580-594 (AQQEAQQASGEAGSA) show a composition bias toward low complexity. Positions 602–617 (TVVDADYEVVDDEKRK) are enriched in acidic residues.

It belongs to the heat shock protein 70 family.

In terms of biological role, acts as a chaperone. This chain is Chaperone protein DnaK, found in Methanosarcina acetivorans (strain ATCC 35395 / DSM 2834 / JCM 12185 / C2A).